The chain runs to 89 residues: Small ribosomal subunit protein uS15 (89 aa).

The protein belongs to the universal ribosomal protein uS15 family. Part of the 30S ribosomal subunit. Forms a bridge to the 50S subunit in the 70S ribosome, contacting the 23S rRNA.

Functionally, one of the primary rRNA binding proteins, it binds directly to 16S rRNA where it helps nucleate assembly of the platform of the 30S subunit by binding and bridging several RNA helices of the 16S rRNA. Forms an intersubunit bridge (bridge B4) with the 23S rRNA of the 50S subunit in the ribosome. The polypeptide is Small ribosomal subunit protein uS15 (Nitratidesulfovibrio vulgaris (strain DSM 19637 / Miyazaki F) (Desulfovibrio vulgaris)).